Reading from the N-terminus, the 207-residue chain is Outer-membrane lipoprotein carrier protein (207 aa).

Residues 1-21 (MRAIRMLLVSALTLGSVTAYA) form the signal peptide.

The protein belongs to the LolA family. In terms of assembly, monomer.

It localises to the periplasm. Its function is as follows. Participates in the translocation of lipoproteins from the inner membrane to the outer membrane. Only forms a complex with a lipoprotein if the residue after the N-terminal Cys is not an aspartate (The Asp acts as a targeting signal to indicate that the lipoprotein should stay in the inner membrane). The protein is Outer-membrane lipoprotein carrier protein of Pseudomonas putida (strain ATCC 47054 / DSM 6125 / CFBP 8728 / NCIMB 11950 / KT2440).